Consider the following 92-residue polypeptide: Large ribosomal subunit protein bL28 (92 aa).

Belongs to the bacterial ribosomal protein bL28 family.

In Borreliella burgdorferi (strain ATCC 35210 / DSM 4680 / CIP 102532 / B31) (Borrelia burgdorferi), this protein is Large ribosomal subunit protein bL28.